The primary structure comprises 339 residues: MAASALYACTKCTQRYPFEELSQGQQLCKECRIAHPIVKCTYCRSEFQQESKTNTICKKCAQNVKQFGTPKPCQYCNIIAAFIGTKCQRCTNSEKKYGPPQTCEQCKQQCAFDRKEEGRRKVDGKLLCWLCTLSYKRVLQKTKEQRKSLGSSHSNSSSSSLTEKDQHHPKHHHHHHHHHHRHSSSHHKISNLSPEEEQGLWKQSHKSSATIQNETPKKKPKLESKPSNGDSSSINQSADSGGTDNFVLISQLKEEVMSLKRLLQQRDQTILEKDKKLTELKADFQYQESNLRTKMNSMEKAHKETVEQLQAKNRELLKQVAALSKGKKFDKSGSILTSP.

N-acetylalanine is present on Ala-2. Phosphoserine occurs at positions 22 and 148. The segment at 144 to 243 is disordered; that stretch reads EQRKSLGSSH…INQSADSGGT (100 aa). A compositionally biased stretch (low complexity) spans 148–160; it reads SLGSSHSNSSSSS. A compositionally biased stretch (basic residues) spans 167–189; the sequence is HHPKHHHHHHHHHHRHSSSHHKI. At Ser-193 the chain carries Phosphoserine. A Phosphothreonine modification is found at Thr-215. Residues 215-224 show a composition bias toward basic and acidic residues; the sequence is TPKKKPKLES. Over residues 228–243 the composition is skewed to polar residues; it reads NGDSSSINQSADSGGT. The stretch at 248-328 forms a coiled coil; it reads LISQLKEEVM…QVAALSKGKK (81 aa).

It belongs to the FAM76 family. In terms of assembly, interacts with HNRNPA2B1 (via C-terminus); the interaction results in retention of HNRNPA2B1 in the nucleus and inhibition of the NF-kappa-B-mediated inflammatory pathway.

Its subcellular location is the nucleus speckle. Negatively regulates the NF-kappa-B-mediated inflammatory pathway by preventing the translocation of HNRNPA2B1 from the nucleus to the cytoplasm. Inhibits the PI3K/Akt/NF-kappa-B pathway-mediated polarization of M1 macrophages by binding to and stabilizing PIK3CD mRNA, resulting in increased levels of PIK3CD protein and increased levels of phosphorylated downstream target AKT which leads to decreased NF-kappa-B signaling. This Homo sapiens (Human) protein is Protein FAM76B (FAM76B).